The following is a 203-amino-acid chain: Urease accessory protein UreG (203 aa).

GTP is bound at residue 13-20 (GPVGSGKT).

The protein belongs to the SIMIBI class G3E GTPase family. UreG subfamily. Homodimer. UreD, UreF and UreG form a complex that acts as a GTP-hydrolysis-dependent molecular chaperone, activating the urease apoprotein by helping to assemble the nickel containing metallocenter of UreC. The UreE protein probably delivers the nickel.

The protein localises to the cytoplasm. Facilitates the functional incorporation of the urease nickel metallocenter. This process requires GTP hydrolysis, probably effectuated by UreG. The sequence is that of Urease accessory protein UreG from Psychromonas ingrahamii (strain DSM 17664 / CCUG 51855 / 37).